A 356-amino-acid chain; its full sequence is 45 kDa calcium-binding protein (356 aa).

Residues 1 to 29 form the signal peptide; it reads MMSRQAFLCSLGSLYLSLLFVFLLMDVYA. Residue Asn-33 is glycosylated (N-linked (GlcNAc...) asparagine). 5 EF-hand domains span residues 92–127, 131–166, 227–262, 272–307, and 308–343; these read KNRK…KTDE, EAVE…SKGL, MLKF…TVEN, WVKD…MNEY, and NALN…FTGS. Asp-105, Asp-107, Asp-109, Lys-111, Glu-116, Asp-144, Asp-146, Asp-148, His-150, Glu-155, Asp-240, Asp-242, Asp-244, Lys-246, Glu-251, Asp-285, Asn-287, Asp-289, Glu-296, Asp-321, Asn-323, Asn-325, His-327, and Glu-332 together coordinate Ca(2+).

The protein belongs to the CREC family.

The protein localises to the golgi apparatus lumen. In terms of biological role, may regulate calcium-dependent activities in the endoplasmic reticulum lumen or post-ER compartment. The chain is 45 kDa calcium-binding protein (SDF4) from Gallus gallus (Chicken).